The sequence spans 527 residues: MKLVDLTADLQALLASPNVHHNLSAPKLTEKVISRNEGTLTSTGAVRATTGAYTGRSPKDKFIVREQSTENQIDWGAVNQPISEEAFEKLYAKVVSYLKQRDELFVFEGFAGADEKYRLPITVVNEFAWHNLFARQLFIRPETDERDTQAQPFTILSAPHFKADPETDGTHSETFIIVSFEKRVILIGGTEYAGEMKKSIFSIMNFLLPQQDILPMHCSANVGEKGDVALFFGLSGTGKTTLSADADRKLIGDDEHGWSDSGVFNIEGGCYAKCINLSEEKEPQIFRAIRFGSVLENVVLDEKTGEADYDNSFYTENTRAAYPIEMIGNIVQPSIAGHPQAIVFLTADAFGVLPPISKLTKEQAMYHFLSGYTSKLAGTERGVTSPQTTFSTCFGSPFLPLPAHVYAEMLGHKIDEHGVQVFLVNTGWTGGGYGVGERMKLSYTRAMVKAAIEGRLNQTDMTADSIFGLRSPVHVPGVPDEVLQPENTWSDKQAYNEKALFLANEFKENFKKFSHADSIAKAGGPLV.

3 residues coordinate substrate: Arg56, Tyr192, and Lys198. Residues Lys198, His217, and 233–241 contribute to the ATP site; that span reads GLSGTGKTT. Residues Lys198 and His217 each contribute to the Mn(2+) site. Asp254 serves as a coordination point for Mn(2+). The ATP site is built by Glu282, Arg319, and Thr444. Arg319 contributes to the substrate binding site.

This sequence belongs to the phosphoenolpyruvate carboxykinase (ATP) family. Mn(2+) serves as cofactor.

The protein resides in the cytoplasm. The catalysed reaction is oxaloacetate + ATP = phosphoenolpyruvate + ADP + CO2. It functions in the pathway carbohydrate biosynthesis; gluconeogenesis. In terms of biological role, involved in the gluconeogenesis. Catalyzes the conversion of oxaloacetate (OAA) to phosphoenolpyruvate (PEP) through direct phosphoryl transfer between the nucleoside triphosphate and OAA. The sequence is that of Phosphoenolpyruvate carboxykinase (ATP) from Bacillus velezensis (strain DSM 23117 / BGSC 10A6 / LMG 26770 / FZB42) (Bacillus amyloliquefaciens subsp. plantarum).